A 219-amino-acid polypeptide reads, in one-letter code: Epididymal secretory glutathione peroxidase (219 aa).

Residues 1–21 (MTVQLGAFYLFPLFMAGFVQT) form the signal peptide. Residue C71 is part of the active site.

This sequence belongs to the glutathione peroxidase family. As to quaternary structure, homotetramer. In terms of tissue distribution, proximal caput epididymis.

It localises to the secreted. The enzyme catalyses 2 glutathione + H2O2 = glutathione disulfide + 2 H2O. Its function is as follows. May constitute a glutathione peroxidase-like protective system against peroxide damage in sperm membrane lipids. Since the purified porcine enzyme has very little activity towards hydrogen peroxide or organic hydroperoxides the protective effect is not likely to be exerted by its enzymatic activity. Instead, may protect sperm from premature acrosome reaction in the epididymis by binding to lipid peroxides, which might otherwise interact with phospholipase A2 and induce the acrosome reaction. In Sus scrofa (Pig), this protein is Epididymal secretory glutathione peroxidase (GPX5).